The primary structure comprises 285 residues: Sulfur carrier protein TtuD (285 aa).

Rhodanese domains are found at residues Glu-20–Thr-127 and Lys-161–Ala-281. Cys-240 is modified (cysteine persulfide).

Post-translationally, cys-240 can accept a sulfur atom as persulfide forms from cysteine desulfurases IscS and SufS.

It participates in tRNA modification. In terms of biological role, required for the efficient 2-thiolation of 5-methyluridine residue at position 54 in the T loop of tRNAs, leading to 5-methyl-2-thiouridine (m(5)s(2)U or s(2)T). TtuD is a sulfur carrier protein that has a role to direct sulfur flow from cysteine desulfurases to m(5)s(2)U synthesis in vivo. It enhances the cysteine desulfurase activity of IscS and SufS, as well as the formation of thiocarboxylated TtuB (TtuB-COSH) in the presence of these desulfurases. This Thermus thermophilus (strain ATCC BAA-163 / DSM 7039 / HB27) protein is Sulfur carrier protein TtuD.